The primary structure comprises 188 residues: Small ribosomal subunit protein uS7 (188 aa).

This sequence belongs to the universal ribosomal protein uS7 family. As to quaternary structure, part of the 30S ribosomal subunit.

One of the primary rRNA binding proteins, it binds directly to 16S rRNA where it nucleates assembly of the head domain of the 30S subunit. Is located at the subunit interface close to the decoding center. This Methanococcus aeolicus (strain ATCC BAA-1280 / DSM 17508 / OCM 812 / Nankai-3) protein is Small ribosomal subunit protein uS7.